We begin with the raw amino-acid sequence, 98 residues long: Small ribosomal subunit protein uS19 (98 aa).

The disordered stretch occupies residues 77–98; that stretch reads TRTFRGHAGGKAEKGGSAPKRK.

The protein belongs to the universal ribosomal protein uS19 family.

Protein S19 forms a complex with S13 that binds strongly to the 16S ribosomal RNA. This is Small ribosomal subunit protein uS19 from Chlorobium luteolum (strain DSM 273 / BCRC 81028 / 2530) (Pelodictyon luteolum).